A 116-amino-acid polypeptide reads, in one-letter code: NADH-ubiquinone oxidoreductase chain 3 (116 aa).

A run of 3 helical transmembrane segments spans residues Val8–Leu28, Phe56–Leu76, and Thr88–Phe108.

The protein belongs to the complex I subunit 3 family.

Its subcellular location is the mitochondrion membrane. It catalyses the reaction a ubiquinone + NADH + 5 H(+)(in) = a ubiquinol + NAD(+) + 4 H(+)(out). Functionally, core subunit of the mitochondrial membrane respiratory chain NADH dehydrogenase (Complex I) that is believed to belong to the minimal assembly required for catalysis. Complex I functions in the transfer of electrons from NADH to the respiratory chain. The immediate electron acceptor for the enzyme is believed to be ubiquinone. The sequence is that of NADH-ubiquinone oxidoreductase chain 3 (MT-ND3) from Scyliorhinus canicula (Small-spotted catshark).